The following is a 358-amino-acid chain: UPF0324 membrane protein CT0845 (358 aa).

10 helical membrane passes run 36–53 (YFPG…ATFL), 57–76 (YGAP…RFLS), 83–105 (LVGI…GMRI), 115–134 (VKPV…FGLA), 146–168 (GVLT…AAVL), 178–200 (TIFT…PVVA), 244–261 (LLRV…SLIF), 276–295 (LLPP…SLGV), 307–325 (VSRW…KTSL), and 335–357 (PVSI…VVWM).

It belongs to the UPF0324 family.

The protein localises to the cell membrane. This is UPF0324 membrane protein CT0845 from Chlorobaculum tepidum (strain ATCC 49652 / DSM 12025 / NBRC 103806 / TLS) (Chlorobium tepidum).